We begin with the raw amino-acid sequence, 70 residues long: Chondroitin proteoglycan 9 (70 aa).

Positions 1 to 19 (MNFWHLLLLAVLFFVTVFG) are cleaved as a signal peptide. O-linked (Xyl...) (chondroitin sulfate) serine glycans are attached at residues Ser-25 and Ser-27.

This chain is Chondroitin proteoglycan 9 (cpg-9), found in Caenorhabditis briggsae.